Consider the following 436-residue polypeptide: UPF0597 protein YhaM (436 aa).

Belongs to the UPF0597 family.

In terms of biological role, thought to be a D-serine dehydratase, however it does not complement a dsdA (D-serine dehydratase) mutant in strain CFT073, suggesting it may not have that function. This is UPF0597 protein YhaM from Escherichia coli O157:H7.